The primary structure comprises 592 residues: Aspartate--tRNA(Asp/Asn) ligase (592 aa).

Glutamate 173 is an L-aspartate binding site. The aspartate stretch occupies residues 197 to 200 (QLFK). Position 219 (arginine 219) interacts with L-aspartate. ATP is bound by residues 219–221 (RDE) and glutamine 228. Histidine 448 contacts L-aspartate. Residue glutamate 481 participates in ATP binding. An L-aspartate-binding site is contributed by arginine 488. 533 to 536 (GLDR) contributes to the ATP binding site.

Belongs to the class-II aminoacyl-tRNA synthetase family. Type 1 subfamily. As to quaternary structure, homodimer.

It localises to the cytoplasm. It carries out the reaction tRNA(Asx) + L-aspartate + ATP = L-aspartyl-tRNA(Asx) + AMP + diphosphate. Its function is as follows. Aspartyl-tRNA synthetase with relaxed tRNA specificity since it is able to aspartylate not only its cognate tRNA(Asp) but also tRNA(Asn). Reaction proceeds in two steps: L-aspartate is first activated by ATP to form Asp-AMP and then transferred to the acceptor end of tRNA(Asp/Asn). In Chromohalobacter salexigens (strain ATCC BAA-138 / DSM 3043 / CIP 106854 / NCIMB 13768 / 1H11), this protein is Aspartate--tRNA(Asp/Asn) ligase.